A 417-amino-acid chain; its full sequence is UPF0597 protein Cphy_1256 (417 aa).

This sequence belongs to the UPF0597 family.

This is UPF0597 protein Cphy_1256 from Lachnoclostridium phytofermentans (strain ATCC 700394 / DSM 18823 / ISDg) (Clostridium phytofermentans).